Reading from the N-terminus, the 233-residue chain is Cytidylate kinase (233 aa).

Residue 15–23 (GPSGAGKST) coordinates ATP. Residues 183–201 (RRDEQDSGREHAPLRRADD) show a composition bias toward basic and acidic residues. The disordered stretch occupies residues 183-202 (RRDEQDSGREHAPLRRADDA).

Belongs to the cytidylate kinase family. Type 1 subfamily.

The protein localises to the cytoplasm. The enzyme catalyses CMP + ATP = CDP + ADP. The catalysed reaction is dCMP + ATP = dCDP + ADP. The protein is Cytidylate kinase of Geobacter sulfurreducens (strain ATCC 51573 / DSM 12127 / PCA).